Reading from the N-terminus, the 87-residue chain is uncharacterized protein (87 aa).

Residues 25–47 (FFWEVCNMILFIIIALCGYLLFS) form a helical membrane-spanning segment.

It localises to the membrane. This is an uncharacterized protein from Bacillus subtilis (strain 168).